The sequence spans 167 residues: UPF0102 protein RB9115 (167 aa).

Belongs to the UPF0102 family.

This chain is UPF0102 protein RB9115, found in Rhodopirellula baltica (strain DSM 10527 / NCIMB 13988 / SH1).